The following is a 359-amino-acid chain: Protein mab-21-like 2 (359 aa).

Belongs to the mab-21 family.

It is found in the nucleus. The protein resides in the cytoplasm. Its function is as follows. Required for several aspects of embryonic development including normal development of the eye. In Homo sapiens (Human), this protein is Protein mab-21-like 2 (MAB21L2).